The sequence spans 402 residues: Multidrug resistance protein MdtH (402 aa).

11 helical membrane passes run 13-33 (YFLL…FPLI), 45-65 (ALMV…LGIF), 99-116 (PWLL…GTLF), 139-159 (LLMM…SWLL), 165-185 (LVCA…AWLL), 214-234 (VLTL…LPIM), 244-264 (AVKW…YPIA), 277-297 (LMAG…VGNL), 300-322 (LFTL…ETLS), 340-360 (LGLA…FDMG), and 368-388 (LPWM…GWQF).

Belongs to the major facilitator superfamily. DHA1 family. MdtH (TC 2.A.1.2.21) subfamily.

It localises to the cell inner membrane. This Citrobacter koseri (strain ATCC BAA-895 / CDC 4225-83 / SGSC4696) protein is Multidrug resistance protein MdtH.